Consider the following 221-residue polypeptide: MILVLAESALELVPREIWSHPAVVADARRRGKKPGGILLDRSRHHPAMAVLLDSRRRGRPDIVHQALLVFQYSLLAARGLGRMYIHTLGDYVISVDPSTRVPKNYNNFVSLVEQLFATGRVPPEGRPLMEIRRQGLRDLLTELGGRWVVMHEAGLRIPLVQLGKEVLDSVVVIGGFPHGDFNNKWVLEEAAARYSLGEVAMDAAQVACRVVAAAEAAAGLL.

S-adenosyl-L-methionine is bound by residues glycine 174, glycine 179, and 196–201 (LGEVAM).

The protein belongs to the class IV-like SAM-binding methyltransferase superfamily. RNA methyltransferase NEP1 family. Homodimer.

The enzyme catalyses a pseudouridine in rRNA + S-adenosyl-L-methionine = an N(1)-methylpseudouridine in rRNA + S-adenosyl-L-homocysteine + H(+). Functionally, methyltransferase involved in ribosomal biogenesis. Specifically catalyzes the N1-methylation of the pseudouridine corresponding to position 914 in M.jannaschii 16S rRNA. This Pyrobaculum arsenaticum (strain DSM 13514 / JCM 11321 / PZ6) protein is Ribosomal RNA small subunit methyltransferase Nep1.